Here is a 205-residue protein sequence, read N- to C-terminus: Octanoyltransferase (205 aa).

Residues 30-205 (NSSDELVWLL…ILKKEFYKIF (176 aa)) form the BPL/LPL catalytic domain. Substrate-binding positions include 68–75 (RGGKYTYH), 140–142 (AFG), and 153–155 (GIA). Residue Cys171 is the Acyl-thioester intermediate of the active site.

This sequence belongs to the LipB family.

Its subcellular location is the cytoplasm. The enzyme catalyses octanoyl-[ACP] + L-lysyl-[protein] = N(6)-octanoyl-L-lysyl-[protein] + holo-[ACP] + H(+). It participates in protein modification; protein lipoylation via endogenous pathway; protein N(6)-(lipoyl)lysine from octanoyl-[acyl-carrier-protein]: step 1/2. Functionally, catalyzes the transfer of endogenously produced octanoic acid from octanoyl-acyl-carrier-protein onto the lipoyl domains of lipoate-dependent enzymes. Lipoyl-ACP can also act as a substrate although octanoyl-ACP is likely to be the physiological substrate. This is Octanoyltransferase from Wolbachia sp. subsp. Brugia malayi (strain TRS).